Reading from the N-terminus, the 931-residue chain is MAEYKDTLNLPNTSFPMKASLSVREPEMLADWQAKGIYQKIRKARVGSKRFILHDGPPYANGHLHCGHALNKILKDIIIKSKTFSGFDAPFVPGWDCHGLPIELNVEKKVGKAGSKISPREFRAKCREYAASQIDIQRDEFQRLGVLGDWYNPYVTMDYHYEANIVRALGLMIKNGHLQQGFKPVHWCIDCGSALAEAEVDYEDKTSPSIDVAFSAVNPSEFLNCFGNQLAVKPLILPIWTTTPWTLPANEAVCLHPEIDYALIDADNSYYIVATDLVESVMARYGISHYKTSGSAKGRVFEHFKLQHPFYKRQVPVVLAEHVTTESGTGSVHTAPAHGPDDYLVGQFYQLPLINPVMANGCFAENVELFAGISVLKANETILAVLSERNVLLASESIRHSYPHCWRHKSPMIFLATPQWFISMDKSNLRQAIINEIDKVNWVPDWGKARISNMVENRPDWCISRQRSWGTPMPLFVHKTTRELHPDTLELIEKVAVMIEKSGIDAWFDLDSSELLGDDAKHYDKITDTMDVWLDSGISHYSVLKHNNDLDFPADVYFEGSDQHRGWFNSSLTTAVAMYGVAPYKTVLTHGYTVDAEGKKLSKSKGNYVALDKLVNQHGADILRLWVASTDYRHEVSISEEIIKRNADAYRRIRNTARFLLANLFDFNPASDCIDAKELLELDRWALKRCQLLQEEIITAYDNYHFHLIYQKIHNFCAVDMGSFYLDLIKDRQYTTAKDSIARRSCQTAMYHMVKAFTIWLAPILSFTAEEIWQTIPGNNSESIFIEHWYDAWPTIDAVNMEDWEQLHIVRDEVNKALEETRQRGEIGSALAAEVTVYADAKALPKLTRLGEELRFLFITSEAKACPISQSPKGLAVTDCGVSIQVTASAHEKCARCWHRREDVGQNQEHPELCLRCVGNISGYHEERLYI.

The short motif at proline 58 to histidine 68 is the 'HIGH' region element. An L-isoleucyl-5'-AMP-binding site is contributed by glutamate 559. The 'KMSKS' region motif lies at lysine 600 to serine 604. Lysine 603 is an ATP binding site. Residues cysteine 894, cysteine 897, cysteine 914, and cysteine 917 each contribute to the Zn(2+) site.

This sequence belongs to the class-I aminoacyl-tRNA synthetase family. IleS type 1 subfamily. In terms of assembly, monomer. Zn(2+) is required as a cofactor.

It is found in the cytoplasm. The enzyme catalyses tRNA(Ile) + L-isoleucine + ATP = L-isoleucyl-tRNA(Ile) + AMP + diphosphate. In terms of biological role, catalyzes the attachment of isoleucine to tRNA(Ile). As IleRS can inadvertently accommodate and process structurally similar amino acids such as valine, to avoid such errors it has two additional distinct tRNA(Ile)-dependent editing activities. One activity is designated as 'pretransfer' editing and involves the hydrolysis of activated Val-AMP. The other activity is designated 'posttransfer' editing and involves deacylation of mischarged Val-tRNA(Ile). The sequence is that of Isoleucine--tRNA ligase from Legionella pneumophila (strain Lens).